Here is a 696-residue protein sequence, read N- to C-terminus: MPSLPVAAAEPMAVDESASKKSKRKLKAAEVEVEASSRKKEKKEKKRKAKEPSPSSSSSSEEEERSSTSSDEPAPAAKKAKKEKTKEKVVVEEEEEDDDEGELTASGDEDPADPNALANFRISESLREKLKSKGIKALFPIQATTFDLVLDGHDLVGRARTGQGKTLAFVLPILESLVNGTHKASRRTDYGRPPTVLVLLPTRELAKQVHTDFAFYGATFGLSACCVYGGSDYRSQEMAIRKGVDIVVGTPGRVKDFVEKGTLNFRSLKFRVLDEADEMLNMGFVDDVELILGKVEDVTKVQTLLFSATIPEWVKKLSLRFLKSGKKTVDLVGDEKLKASASVRHLALPCNRAARAQVIPDIIRCYSRGGRTIIFTETKESASDLSGLIAGSRALHGDVAQAQREVILAGFRSGKFLVLVATNVAARGLDINDVQLIIQCEPPRDVEAYIHRSGRTGRAGNTGVAVMLFEPRYKFNVNRIERESGVKFEHISAPQPTDVAQSAGTEAAEAISSVSDSVIPVFREQAEQLLNSSGMSAVDLLAKALAKAVGYTDIKKRSLLSSMDNHTTLLLQTGRSVYAAGFVLSTLKRFMPEERLADVKGITITADGTGAVFDVPSAEVEDYIQGAQNAAMVTVEEVKQLPPLQEREQSGGSRGGGRFGNRRFSGGGGGRGGGGRGFGGGRGRGGGGGNRFNKRY.

Residues 1-116 form a disordered region; that stretch reads MPSLPVAAAE…GDEDPADPNA (116 aa). Positions 16–97 form a coiled coil; it reads ESASKKSKRK…KVVVEEEEED (82 aa). A compositionally biased stretch (basic and acidic residues) spans 27 to 38; the sequence is KAAEVEVEASSR. Residues 39 to 49 are compositionally biased toward basic residues; sequence KKEKKEKKRKA. Residues 67 to 77 show a composition bias toward low complexity; sequence STSSDEPAPAA. The span at 92-112 shows a compositional bias: acidic residues; sequence EEEEEDDDEGELTASGDEDPA. The short motif at 115-143 is the Q motif element; sequence NALANFRISESLREKLKSKGIKALFPIQA. The region spanning 146-328 is the Helicase ATP-binding domain; the sequence is FDLVLDGHDL…LRFLKSGKKT (183 aa). 159 to 166 serves as a coordination point for ATP; the sequence is ARTGQGKT. The short motif at 274–277 is the DEAD box element; it reads DEAD. Positions 357–500 constitute a Helicase C-terminal domain; the sequence is QVIPDIIRCY…ISAPQPTDVA (144 aa). The disordered stretch occupies residues 641–696; that stretch reads LPPLQEREQSGGSRGGGRFGNRRFSGGGGGRGGGGRGFGGGRGRGGGGGNRFNKRY. Residues 652–690 are compositionally biased toward gly residues; that stretch reads GSRGGGRFGNRRFSGGGGGRGGGGRGFGGGRGRGGGGGN.

Belongs to the DEAD box helicase family. DDX21/DDX50 subfamily.

It is found in the nucleus. It carries out the reaction ATP + H2O = ADP + phosphate + H(+). This chain is DEAD-box ATP-dependent RNA helicase 7, found in Oryza sativa subsp. japonica (Rice).